The chain runs to 196 residues: ATP-dependent Clp protease proteolytic subunit (196 aa).

Ser-99 (nucleophile) is an active-site residue. The active site involves His-124.

This sequence belongs to the peptidase S14 family. In terms of assembly, fourteen ClpP subunits assemble into 2 heptameric rings which stack back to back to give a disk-like structure with a central cavity, resembling the structure of eukaryotic proteasomes.

Its subcellular location is the cytoplasm. The catalysed reaction is Hydrolysis of proteins to small peptides in the presence of ATP and magnesium. alpha-casein is the usual test substrate. In the absence of ATP, only oligopeptides shorter than five residues are hydrolyzed (such as succinyl-Leu-Tyr-|-NHMec, and Leu-Tyr-Leu-|-Tyr-Trp, in which cleavage of the -Tyr-|-Leu- and -Tyr-|-Trp bonds also occurs).. Cleaves peptides in various proteins in a process that requires ATP hydrolysis. Has a chymotrypsin-like activity. Plays a major role in the degradation of misfolded proteins. The chain is ATP-dependent Clp protease proteolytic subunit from Campylobacter lari (strain RM2100 / D67 / ATCC BAA-1060).